The following is a 361-amino-acid chain: uncharacterized protein (361 aa).

Residues 1-17 (MNLFIYVLLLSIWTSSC) form the signal peptide. The Extracellular segment spans residues 18–47 (LDRNESNGSATAVTTHAEFKQTKLQELRRR). The N-linked (GlcNAc...) asparagine glycan is linked to Asn-24. A helical transmembrane segment spans residues 48 to 68 (LLIIVIGTLITGYMVSCTCLL). At 69-361 (HYSCDSEEAH…EDIYKNSRNN (293 aa)) the chain is on the cytoplasmic side. Residues 95–106 (SSKISFTDSKSP) are compositionally biased toward polar residues. A disordered region spans residues 95 to 197 (SSKISFTDSK…SQVSPSYPEK (103 aa)). The segment covering 144–158 (PSSQKKPSKPSAPKK) has biased composition (low complexity). Over residues 169-185 (HRTRSPKKAHRQAHAHK) the composition is skewed to basic residues.

Its subcellular location is the membrane. This is an uncharacterized protein from Bos taurus (Bovine).